We begin with the raw amino-acid sequence, 474 residues long: Trigger factor (474 aa).

Positions 171-258 constitute a PPIase FKBP-type domain; it reads GDVAVIDFQG…LKELKTRDLP (88 aa). A disordered region spans residues 441–474; sequence TEVDAASATVETTATETAEEAPEAPKAKKGKKKA. Positions 444 to 456 are enriched in low complexity; it reads DAASATVETTATE.

This sequence belongs to the FKBP-type PPIase family. Tig subfamily.

The protein resides in the cytoplasm. It catalyses the reaction [protein]-peptidylproline (omega=180) = [protein]-peptidylproline (omega=0). Involved in protein export. Acts as a chaperone by maintaining the newly synthesized protein in an open conformation. Functions as a peptidyl-prolyl cis-trans isomerase. This chain is Trigger factor, found in Synechococcus sp. (strain ATCC 27144 / PCC 6301 / SAUG 1402/1) (Anacystis nidulans).